The sequence spans 532 residues: Neutral amino acid transporter A (532 aa).

Position 1 is an N-acetylmethionine (Met-1). A disordered region spans residues Met-1–Met-29. Topologically, residues Met-1–Arg-41 are cytoplasmic. Helical transmembrane passes span His-42 to Leu-62, Met-88 to Ser-108, and Ala-119 to Ile-139. Residues Lys-140–Thr-216 lie on the Extracellular side of the membrane. 2 N-linked (GlcNAc...) asparagine glycosylation sites follow: Asn-201 and Asn-206. 6 consecutive transmembrane segments (helical) span residues Asp-217 to Leu-237, Ala-257 to Ile-277, Ile-298 to Phe-318, Phe-328 to Thr-348, Ile-373 to Ile-393, and Val-418 to Ile-438. The tract at residues Glu-495–Leu-532 is disordered. Phosphoserine occurs at positions 507, 527, and 530.

This sequence belongs to the dicarboxylate/amino acid:cation symporter (DAACS) (TC 2.A.23) family. SLC1A4 subfamily.

It localises to the membrane. The protein resides in the melanosome. It carries out the reaction L-threonine(in) + Na(+)(in) = L-threonine(out) + Na(+)(out). The catalysed reaction is L-serine(in) + Na(+)(in) = L-serine(out) + Na(+)(out). It catalyses the reaction L-cysteine(in) + Na(+)(in) = L-cysteine(out) + Na(+)(out). The enzyme catalyses L-alanine(in) + Na(+)(in) = L-alanine(out) + Na(+)(out). It carries out the reaction L-proline(in) + Na(+)(in) = L-proline(out) + Na(+)(out). The catalysed reaction is 4-hydroxy-L-proline(in) + Na(+)(in) = 4-hydroxy-L-proline(out) + Na(+)(out). Sodium-dependent neutral amino-acid transporter that mediates transport of alanine, serine, cysteine, proline, hydroxyproline and threonine. The protein is Neutral amino acid transporter A (Slc1a4) of Mus musculus (Mouse).